The following is a 1252-amino-acid chain: Immunoglobulin superfamily DCC subclass member 4 (1252 aa).

The first 22 residues, 1–22 (MARADTGRGLLVLTFCLLSARG), serve as a signal peptide directing secretion. Topologically, residues 23 to 956 (ELPLPQETTV…SDSLDVHAVT (934 aa)) are extracellular. 4 Ig-like domains span residues 27–136 (PQET…VAVV), 142–228 (EDFS…ASLT), 241–329 (QDVV…AELR), and 334–420 (PAIS…APLA). Disulfide bonds link Cys55-Cys120 and Cys163-Cys211. The N-linked (GlcNAc...) asparagine glycan is linked to Asn88. N-linked (GlcNAc...) asparagine glycosylation occurs at Asn251. Cystine bridges form between Cys264/Cys311 and Cys355/Cys404. 5 consecutive Fibronectin type-III domains span residues 430 to 524 (APTR…TLDD), 526 to 622 (PSAA…TPGV), 631 to 742 (APAE…TPDL), 751 to 844 (PPAH…TLPD), and 849 to 944 (PPSD…TLQK). The interval 669 to 688 (TEEEADGDRPPGGRGDQAWD) is disordered. The helical transmembrane segment at 957–977 (GIIVGVCLGLLCLLACMCAGL) threads the bilayer. Topologically, residues 978–1252 (RRSSHREALP…RAPVSSAQVP (275 aa)) are cytoplasmic. Thr994 carries the phosphothreonine modification.

It belongs to the immunoglobulin superfamily. DCC family. As to expression, expressed in skeletal muscle, heart and brain. Brain expression is hippocampus-specific.

It is found in the cell membrane. The protein is Immunoglobulin superfamily DCC subclass member 4 (Igdcc4) of Mus musculus (Mouse).